Consider the following 256-residue polypeptide: Small ribosomal subunit protein eS1 (256 aa).

Over residues M1 to K18 the composition is skewed to basic residues. The disordered stretch occupies residues M1–T20. Position 2 is an N-acetylalanine; partial (A2).

It belongs to the eukaryotic ribosomal protein eS1 family. As to quaternary structure, component of the small ribosomal subunit. Mature ribosomes consist of a small (40S) and a large (60S) subunit. The 40S subunit contains about 33 different proteins and 1 molecule of RNA (18S). The 60S subunit contains about 49 different proteins and 3 molecules of RNA (25S, 5.8S and 5S).

Its subcellular location is the cytoplasm. This Aspergillus terreus (strain NIH 2624 / FGSC A1156) protein is Small ribosomal subunit protein eS1 (rps1).